We begin with the raw amino-acid sequence, 285 residues long: Ribosomal RNA small subunit methyltransferase A (285 aa).

S-adenosyl-L-methionine-binding residues include N11, L13, G37, E57, D85, and N105.

The protein belongs to the class I-like SAM-binding methyltransferase superfamily. rRNA adenine N(6)-methyltransferase family. RsmA subfamily.

The protein localises to the cytoplasm. The catalysed reaction is adenosine(1518)/adenosine(1519) in 16S rRNA + 4 S-adenosyl-L-methionine = N(6)-dimethyladenosine(1518)/N(6)-dimethyladenosine(1519) in 16S rRNA + 4 S-adenosyl-L-homocysteine + 4 H(+). Functionally, specifically dimethylates two adjacent adenosines (A1518 and A1519) in the loop of a conserved hairpin near the 3'-end of 16S rRNA in the 30S particle. May play a critical role in biogenesis of 30S subunits. This is Ribosomal RNA small subunit methyltransferase A from Campylobacter curvus (strain 525.92).